A 185-amino-acid chain; its full sequence is Biofilm operon icaADBC HTH-type negative transcriptional regulator IcaR (185 aa).

The region spanning 1–59 (MKDKIIDNAITLFSEKGYDGTTLDDISKSVNIKKASLYYHYDNKEEIYRKSVENCFNYF) is the HTH tetR-type domain. The H-T-H motif DNA-binding region spans 22–41 (TLDDISKSVNIKKASLYYHY).

In terms of assembly, homodimer.

Functionally, represses transcription of the icaADBC operon necessary for biofilm production. The protein is Biofilm operon icaADBC HTH-type negative transcriptional regulator IcaR (icaR) of Staphylococcus epidermidis (strain ATCC 35984 / DSM 28319 / BCRC 17069 / CCUG 31568 / BM 3577 / RP62A).